A 1043-amino-acid chain; its full sequence is Protein translocase subunit SecA (1043 aa).

ATP is bound by residues Q143, 161–165 (GEGKT), and D665. Residues 980–1005 (ATAAPAAETTTTAKAADAARQQPPAA) show a composition bias toward low complexity. Positions 980–1043 (ATAAPAAETT…KYKHCHGRNA (64 aa)) are disordered. Residues 1008-1022 (EEQKRQPVHVEKTPG) are compositionally biased toward basic and acidic residues. Residues C1027, C1029, C1038, and H1039 each coordinate Zn(2+). Over residues 1033–1043 (KKYKHCHGRNA) the composition is skewed to basic residues.

The protein belongs to the SecA family. As to quaternary structure, monomer and homodimer. Part of the essential Sec protein translocation apparatus which comprises SecA, SecYEG and auxiliary proteins SecDF. Other proteins may also be involved. The cofactor is Zn(2+).

It localises to the cell inner membrane. Its subcellular location is the cytoplasm. The enzyme catalyses ATP + H2O + cellular proteinSide 1 = ADP + phosphate + cellular proteinSide 2.. Functionally, part of the Sec protein translocase complex. Interacts with the SecYEG preprotein conducting channel. Has a central role in coupling the hydrolysis of ATP to the transfer of proteins into and across the cell membrane, serving as an ATP-driven molecular motor driving the stepwise translocation of polypeptide chains across the membrane. This Chloroherpeton thalassium (strain ATCC 35110 / GB-78) protein is Protein translocase subunit SecA.